The primary structure comprises 491 residues: Synaptotagmin-9 (491 aa).

The Vesicular portion of the chain corresponds to 1-52 (MPGARDALCHQALQLLAELCARGALEHDSCQDFIYHLRDRARPRLRDPDISV). The tract at residues 9–31 (CHQALQLLAELCARGALEHDSCQ) is cysteine motif. Residues 53-73 (SLLTLVVTACGLALFGVSLFV) traverse the membrane as a helical segment. The Cytoplasmic segment spans residues 74 to 491 (SWKLCWVPWR…AHWHSLMEKR (418 aa)). A compositionally biased stretch (polar residues) spans 91 to 104 (SKDNNQEPLNYTDT). Positions 91 to 147 (SKDNNQEPLNYTDTETNEQENSEDFLDPPTPCPDSSMKISHTSPDIPLSTQPGGQEN) are disordered. A compositionally biased stretch (acidic residues) spans 105 to 116 (ETNEQENSEDFL). A compositionally biased stretch (polar residues) spans 127–144 (MKISHTSPDIPLSTQPGG). Ser177 carries the post-translational modification Phosphoserine. 2 consecutive C2 domains span residues 220–341 (ACGK…ILWK) and 352–485 (DLGE…AHWH). Ca(2+) contacts are provided by Asp251, Asp257, Asp309, Phe310, Asp311, Ser314, Asp317, Asp383, Asp389, Asp443, and Asp445.

Belongs to the synaptotagmin family. In terms of assembly, homodimer; disulfide-linked via the cysteine motif. Can also form heterodimers with SYT3, SYT6, SYT7 and SYT10. Interacts with DNAJC5 and SNAP25, but not with HSC70. The interaction with DNAJC5 is stimulated tenfold in presence of calcium while the interaction with SNAP25 is inhibited. The cofactor is Ca(2+).

Its subcellular location is the cytoplasmic vesicle. It is found in the secretory vesicle. It localises to the synaptic vesicle membrane. In terms of biological role, may be involved in Ca(2+)-dependent exocytosis of secretory vesicles through Ca(2+) and phospholipid binding to the C2 domain or may serve as Ca(2+) sensors in the process of vesicular trafficking and exocytosis. The chain is Synaptotagmin-9 (Syt9) from Mus musculus (Mouse).